The chain runs to 364 residues: Flavonoid 3'-O-methyltransferase 3 (364 aa).

D232 contributes to the S-adenosyl-L-methionine binding site. H270 (proton acceptor) is an active-site residue.

Belongs to the class I-like SAM-binding methyltransferase superfamily. Cation-independent O-methyltransferase family. In terms of assembly, homodimer.

It carries out the reaction quercetin + S-adenosyl-L-methionine = isorhamnetin + S-adenosyl-L-homocysteine + H(+). It catalyses the reaction luteolin + S-adenosyl-L-methionine = chrysoeriol + S-adenosyl-L-homocysteine + H(+). The enzyme catalyses a 3'-hydroxyflavone + S-adenosyl-L-methionine = a 3'-methoxyflavone + S-adenosyl-L-homocysteine + H(+). The catalysed reaction is rhamnetin + S-adenosyl-L-methionine = rhamnacene + S-adenosyl-L-homocysteine + H(+). It carries out the reaction 3',4',7,8-tetrahydroxyflavone + S-adenosyl-L-methionine = 4',7,8-trihydroxy-3'-methoxyflavone-7-olate + S-adenosyl-L-homocysteine + H(+). It catalyses the reaction taxifolin + S-adenosyl-L-methionine = taxifolin 3'-methyl ether + S-adenosyl-L-homocysteine + H(+). The protein operates within flavonoid metabolism. Its function is as follows. Flavonoid 3'-O-methyltransferase involved in the biosynthesis of polymethoxylated flavonoids natural products such as pebrellin, aroma compounds which contribute to the flavor of peppermint, and exhibit pharmacological activities such as anti-allergic, anti-oxidant, antibacterial, anti-proliferative, and anti-inflammatory effects. Catalyzes S-adenosylmethionine-dependent regioselective 3'-O-methylation of flavonoids; active on various hydroxylated flavonoid substrates, including quercetin, rhamnetin, luteolin (LUT), 7,8,3'4'-tetrahydroxy-flavone and taxifolin, and, with a lower efficiency, eupatorin and hesperetin. In Mentha piperita (Peppermint), this protein is Flavonoid 3'-O-methyltransferase 3.